A 436-amino-acid chain; its full sequence is MTSVPIFESVSRFLPPANEDEQYWWKITGQHMARMMHEAGYPEDRQVECLLFHRFKVIPCLGPRPRSDTPWYKSRVGGGAADGCPINYSWRFGTADRKPHIRNFIEPLGALTNTPADPLNEVATKALLQDYSMTLPNVDLEAFWTFAPHYRPRIIEKADIEKLAGASLLVGAEMSPDSYTIDIKAYMYPRVPSQTSQLLTTILPQAMRDAYGENVCLDSLNFVHEFMTKDPQGSQLVLTGTTGIDCCKLQDTRVKIYVITRNTSFDHIAAIMTLGGRRPISEELLGQLKALWYELKGAPAELPSSEQLPVQTKPDGSKNPIVVPFYFDIQPRLALPDVKAYIDVSTSPVSDLAAANAVVRHLEQHGSGQNPKAYLNVLKDITPVEELETQKGVLAFYSVAVKKNELDITSYFNPQVYKRYFAHEVHLNGQRRSVFE.

It belongs to the tryptophan dimethylallyltransferase family.

It functions in the pathway secondary metabolite biosynthesis. In terms of biological role, prenyltransferase; part of the gene cluster that mediates the biosynthesis of neosartoricin B, a prenylated anthracenone that probably exhibits T-cell antiproliferative activity, suggestive of a physiological role as an immunosuppressive agent. The non-reducing polyketide synthase nscA probably synthesizes and cyclizes the decaketide backbone. The hydrolase nscB then mediates the product release through hydrolysis followed by spontaneous decarboxylation. The prenyltransferase nscD catalyzes the addition of the dimethylallyl group to the aromatic C5. The FAD-dependent monooxygenase nscC is then responsible for the stereospecific hydroxylation at C2. Neosartoricin B can be converted into two additional compounds neosartoricins C and D. Neosartoricin C is a spirocyclic compound that is cyclized through the attack of C3 hydroxyl on C14, followed by dehydration. On the other hand, neosartoricin D is a further cyclized compound in which attack of C2 on C14 in neosartoricin C results in the formation of the acetal-containing dioxabicyclo-octanone ring. Both of these compounds are novel and possibly represent related metabolites of the gene cluster. This is Prenyltransferase nscD from Trichophyton tonsurans (strain CBS 112818) (Scalp ringworm fungus).